Reading from the N-terminus, the 56-residue chain is Large ribosomal subunit protein bL32 (56 aa).

It belongs to the bacterial ribosomal protein bL32 family.

This chain is Large ribosomal subunit protein bL32, found in Brevibacillus brevis (strain 47 / JCM 6285 / NBRC 100599).